A 535-amino-acid chain; its full sequence is Arginine-containing cyclodipeptide synthase anoA (535 aa).

A disordered region spans residues 93-114; it reads LLSPPREPGPIDSETKTREKKS. A compositionally biased stretch (basic and acidic residues) spans 105 to 114; that stretch reads SETKTREKKS. The Conserved DDXXE motif motif lies at 424-428; the sequence is DDIAE.

It belongs to the arginine-containing cyclodipeptide synthase family.

It carries out the reaction L-tryptophyl-tRNA(Trp) + L-arginyl-tRNA(Arg) = cyclo(L-arginyl-L-tryptophyl) + tRNA(Trp) + tRNA(Arg) + H(+). Its pathway is secondary metabolite biosynthesis. Functionally, arginine-containing cyclodipeptide synthase; part of the cluster that mediates the biosynthesis of a highly modified cyclo-arginine-tryptophan dipeptide (cRW). Within the pathway, AnoA acts as the scaffold-generating enzyme and is responsible for formation of the cyclo-Arg-Trp diketopiperazine (cRW) from L-arginyl-tRNA(Arg) + L-tryptophanyl-tRNA(Trp). Additional enzymes from the cluster then further modify the cyclo-Arg-Asp diketopiperazine (cRW) scaffold. The sequence is that of Arginine-containing cyclodipeptide synthase anoA from Aspergillus nomiae (Aspergillus nomius).